The chain runs to 118 residues: V-type proton ATPase subunit G 2 (118 aa).

The disordered stretch occupies residues R26–R90. Over residues Q35–F55 the composition is skewed to basic and acidic residues. Composition is skewed to polar residues over residues Q56 to L69 and R78 to Q89.

This sequence belongs to the V-ATPase G subunit family. V-ATPase is a heteromultimeric enzyme made up of two complexes: the ATP-hydrolytic V1 complex and the proton translocation V0 complex. The V1 complex consists of three catalytic AB heterodimers that form a heterohexamer, three peripheral stalks each consisting of EG heterodimers, one central rotor including subunits D and F, and the regulatory subunits C and H. The proton translocation complex V0 consists of the proton transport subunit a, a ring of proteolipid subunits c9c'', rotary subunit d, subunits e and f, and the accessory subunits ATP6AP1/Ac45 and ATP6AP2/PRR.

Its subcellular location is the melanosome. It localises to the cytoplasmic vesicle. The protein resides in the clathrin-coated vesicle membrane. Subunit of the V1 complex of vacuolar(H+)-ATPase (V-ATPase), a multisubunit enzyme composed of a peripheral complex (V1) that hydrolyzes ATP and a membrane integral complex (V0) that translocates protons. V-ATPase is responsible for acidifying and maintaining the pH of intracellular compartments and in some cell types, is targeted to the plasma membrane, where it is responsible for acidifying the extracellular environment. This is V-type proton ATPase subunit G 2 (ATP6V1G2) from Sus scrofa (Pig).